Reading from the N-terminus, the 592-residue chain is Guanylate-binding protein 1 (592 aa).

Residues 1-311 (MASEIHMTGP…NAISSGDLPC (311 aa)) are GTPase domain (Globular). The 244-residue stretch at 35-278 (TQPMVVVAIV…FCSYIFSNSK (244 aa)) folds into the GB1/RHD3-type G domain. Residues 45 to 52 (GLYRTGKS), 67 to 69 (LGS), and 97 to 101 (DTEGL) each bind GTP. Ser-156 carries the phosphoserine modification. Cys-589 carries the post-translational modification Cysteine methyl ester. Cys-589 is lipidated: S-farnesyl cysteine. Thr-590 carries the post-translational modification Phosphothreonine. Positions 590 to 592 (TIS) are cleaved as a propeptide — removed in mature form.

The protein belongs to the TRAFAC class dynamin-like GTPase superfamily. GB1/RHD3 GTPase family. GB1 subfamily. In terms of assembly, homodimer; homodimerization occurs upon GTP-binding and is required for the second hydrolysis step from GDP to GMP. Undergoes conformational changes and oligomerization upon GTP-binding and hydrolysis. Heterodimer with other family members, including GBP2, GBP3, GBP4 and GBP5. Dimerization regulates subcellular location to membranous structures. Interacts with SQSTM1. Interacts (when phosphorylated) with 14-3-3 protein sigma (SFN); leading to GBP1 retention in the cytosol and inactivation. Isoprenylation is required for proper subcellular location. Post-translationally, phosphorylated at Ser-156 by PIM1 in absence of infection, inhibits GBP1: phosphorylation promotes interaction with 14-3-3 protein sigma (SFN), leading to GBP1 retention in the cytosol. Dephosphorylated in response to infection, liberating GBP1.

The protein localises to the cytoplasmic vesicle membrane. Its subcellular location is the golgi apparatus membrane. It localises to the cell membrane. The protein resides in the cytoplasm. It is found in the cytosol. The protein localises to the secreted. It carries out the reaction GTP + H2O = GDP + phosphate + H(+). It catalyses the reaction GDP + H2O = GMP + phosphate + H(+). Its function is as follows. Interferon (IFN)-inducible GTPase that plays important roles in innate immunity against a diverse range of bacterial, viral and protozoan pathogens. Hydrolyzes GTP to GMP in two consecutive cleavage reactions: GTP is first hydrolyzed to GDP and then to GMP in a processive manner. Following infection, recruited to the pathogen-containing vacuoles or vacuole-escaped bacteria and promotes both inflammasome assembly and autophagy. Acts as a positive regulator of inflammasome assembly by facilitating the detection of inflammasome ligands from pathogens. Involved in the lysis of pathogen-containing vacuoles, releasing pathogens into the cytosol. Following pathogen release in the cytosol, forms a protein coat in a GTPase-dependent manner that encapsulates pathogens and promotes the detection of ligands by pattern recognition receptors. Plays a key role in inflammasome assembly in response to infection by Gram-negative bacteria: following pathogen release in the cytosol, forms a protein coat that encapsulates Gram-negative bacteria and directly binds to lipopolysaccharide (LPS), disrupting the O-antigen barrier and unmasking lipid A that is that detected by the non-canonical inflammasome effector CASP4/CASP11. Also promotes recruitment of proteins that mediate bacterial cytolysis, leading to release double-stranded DNA (dsDNA) that activates the AIM2 inflammasome. Involved in autophagy by regulating bacteriolytic peptide generation via its interaction with ubiquitin-binding protein SQSTM1, which delivers monoubiquitinated proteins to autolysosomes for the generation of bacteriolytic peptides. Confers protection to several pathogens, including the bacterial pathogens L.monocytogenes and M.bovis BCG as well as the protozoan pathogen T.gondii. Exhibits antiviral activity against influenza virus. The chain is Guanylate-binding protein 1 (GBP1) from Pongo abelii (Sumatran orangutan).